The primary structure comprises 87 residues: Down syndrome critical region protein 10 (87 aa).

The polypeptide is Down syndrome critical region protein 10 (DSCR10) (Pan troglodytes (Chimpanzee)).